We begin with the raw amino-acid sequence, 160 residues long: 2-C-methyl-D-erythritol 2,4-cyclodiphosphate synthase (160 aa).

A divalent metal cation contacts are provided by D10 and H12. Residues 10–12 (DVH) and 36–37 (HS) contribute to the 4-CDP-2-C-methyl-D-erythritol 2-phosphate site. H44 is an a divalent metal cation binding site. 4-CDP-2-C-methyl-D-erythritol 2-phosphate-binding positions include 58 to 60 (DIG), 134 to 137 (TTTE), F141, and R144.

It belongs to the IspF family. Homotrimer. A divalent metal cation serves as cofactor.

The enzyme catalyses 4-CDP-2-C-methyl-D-erythritol 2-phosphate = 2-C-methyl-D-erythritol 2,4-cyclic diphosphate + CMP. Its pathway is isoprenoid biosynthesis; isopentenyl diphosphate biosynthesis via DXP pathway; isopentenyl diphosphate from 1-deoxy-D-xylulose 5-phosphate: step 4/6. Its function is as follows. Involved in the biosynthesis of isopentenyl diphosphate (IPP) and dimethylallyl diphosphate (DMAPP), two major building blocks of isoprenoid compounds. Catalyzes the conversion of 4-diphosphocytidyl-2-C-methyl-D-erythritol 2-phosphate (CDP-ME2P) to 2-C-methyl-D-erythritol 2,4-cyclodiphosphate (ME-CPP) with a corresponding release of cytidine 5-monophosphate (CMP). This chain is 2-C-methyl-D-erythritol 2,4-cyclodiphosphate synthase, found in Phocaeicola vulgatus (strain ATCC 8482 / DSM 1447 / JCM 5826 / CCUG 4940 / NBRC 14291 / NCTC 11154) (Bacteroides vulgatus).